We begin with the raw amino-acid sequence, 336 residues long: Torsin-1B (336 aa).

The first 24 residues, 1 to 24 (MRRIGAFGGSTALWALLAAHVAGA), serve as a signal peptide directing secretion. An N-linked (GlcNAc...) asparagine glycan is attached at N64. ATP is bound at residue 109–116 (GWAGTGKN). Residue N165 is glycosylated (N-linked (GlcNAc...) asparagine).

It belongs to the ClpA/ClpB family. Torsin subfamily. In terms of assembly, homohexamer. Interacts with TOR1A; the interaction may be specific of neural tissues. Interacts with TOR1AIP1; TOR1AIP1 is required for TOR1B location on the nuclear membrane. Interacts (ATP-bound) with TOR1AIP2; important for endoplasmic reticulum integrity. N-glycosylated. In terms of tissue distribution, highly expressed in liver and muscle; lower expression levels are observed in brain (at protein level).

It is found in the endoplasmic reticulum lumen. The protein localises to the nucleus membrane. It carries out the reaction ATP + H2O = ADP + phosphate + H(+). In terms of biological role, may serve as a molecular chaperone assisting in the proper folding of secreted and/or membrane proteins. Plays a role in non-neural cells nuclear envelope and endoplasmic reticulum integrity. May have a redundant function with TOR1A in non-neural tissues. The chain is Torsin-1B (Tor1b) from Mus musculus (Mouse).